Reading from the N-terminus, the 1215-residue chain is Pesticidal crystal protein Cry1Ka (1215 aa).

This sequence belongs to the delta endotoxin family.

In terms of biological role, promotes colloidosmotic lysis by binding to the midgut epithelial cells of insects. Selectively toxic to Artogeia rapae but not active on Plutella xylostella. This chain is Pesticidal crystal protein Cry1Ka (cry1Ka), found in Bacillus thuringiensis subsp. morrisoni.